Here is a 541-residue protein sequence, read N- to C-terminus: L-ornithine N(5)-monooxygenase (541 aa).

FAD is bound by residues 50-58 and Q69; that span reads EKQPEFQWH. K74 is a substrate binding site. Residue 223–226 coordinates NADP(+); sequence SGQS. Substrate-binding positions include 269–272 and N300; that span reads NEIF. 300–302 is a binding site for NADP(+); the sequence is NYS. The tract at residues 430-474 is disordered; that stretch reads TEIPKGPDGSLFDASEEEATWRPASPITPASPSPPSTPTSSALSQ. 520-522 lines the FAD pocket; it reads SLL. S523 lines the substrate pocket.

The protein belongs to the lysine N(6)-hydroxylase/L-ornithine N(5)-oxygenase family. In terms of assembly, homotetramer. FAD serves as cofactor.

The enzyme catalyses L-ornithine + NADPH + O2 = N(5)-hydroxy-L-ornithine + NADP(+) + H2O. It catalyses the reaction L-ornithine + NADH + O2 = N(5)-hydroxy-L-ornithine + NAD(+) + H2O. The protein operates within siderophore biosynthesis. In terms of biological role, L-ornithine N(5)-monooxygenase; part of the siderophore basidioferrin biosynthetic pathway. The biosynthesis of basidioferrin depends on the hydroxylation of ornithine to N(5)-hydroxyornithine, catalyzed by the monooxygenase SMO1. The second step, the acylation of N(5)-hydroxy-L-ornithine is catalyzed by a not yet identified N-acyltransferase. Finally, assembly of basidioferrin is catalyzed by the nonribosomal peptide synthase (NRPS) NPS2 via amide bond formation between three L-AHO molecules to release the linear L-AHO trimer. This chain is L-ornithine N(5)-monooxygenase (SMO1), found in Ceriporiopsis subvermispora (strain B) (White-rot fungus).